Here is a 278-residue protein sequence, read N- to C-terminus: 3-methyl-2-oxobutanoate hydroxymethyltransferase (278 aa).

Mg(2+) contacts are provided by Asp-43 and Asp-82. Residues Asp-43–Ser-44, Asp-82, and Lys-112 each bind 3-methyl-2-oxobutanoate. Residue Glu-114 coordinates Mg(2+). Catalysis depends on Glu-181, which acts as the Proton acceptor.

It belongs to the PanB family. Homodecamer; pentamer of dimers. It depends on Mg(2+) as a cofactor.

The protein localises to the cytoplasm. It catalyses the reaction 3-methyl-2-oxobutanoate + (6R)-5,10-methylene-5,6,7,8-tetrahydrofolate + H2O = 2-dehydropantoate + (6S)-5,6,7,8-tetrahydrofolate. Its pathway is cofactor biosynthesis; (R)-pantothenate biosynthesis; (R)-pantoate from 3-methyl-2-oxobutanoate: step 1/2. Catalyzes the reversible reaction in which hydroxymethyl group from 5,10-methylenetetrahydrofolate is transferred onto alpha-ketoisovalerate to form ketopantoate. This chain is 3-methyl-2-oxobutanoate hydroxymethyltransferase, found in Bacillus cereus (strain B4264).